Consider the following 144-residue polypeptide: Nucleoside diphosphate kinase (144 aa).

Residues lysine 11, phenylalanine 59, arginine 87, threonine 93, arginine 104, and asparagine 114 each contribute to the ATP site. Histidine 117 (pros-phosphohistidine intermediate) is an active-site residue.

This sequence belongs to the NDK family. As to quaternary structure, homotetramer. The cofactor is Mg(2+).

The protein localises to the cytoplasm. The catalysed reaction is a 2'-deoxyribonucleoside 5'-diphosphate + ATP = a 2'-deoxyribonucleoside 5'-triphosphate + ADP. The enzyme catalyses a ribonucleoside 5'-diphosphate + ATP = a ribonucleoside 5'-triphosphate + ADP. Major role in the synthesis of nucleoside triphosphates other than ATP. The ATP gamma phosphate is transferred to the NDP beta phosphate via a ping-pong mechanism, using a phosphorylated active-site intermediate. This Aliivibrio fischeri (strain MJ11) (Vibrio fischeri) protein is Nucleoside diphosphate kinase.